Reading from the N-terminus, the 580-residue chain is uncharacterized protein (580 aa).

The PE-PPE domain occupies 300–525 (PGYTATFLET…LRVLVELGYD (226 aa)).

It belongs to the mycobacterial PPE family.

This is an uncharacterized protein from Mycobacterium tuberculosis (strain CDC 1551 / Oshkosh).